The sequence spans 108 residues: Circadian clock oscillator protein KaiB (108 aa).

This sequence belongs to the KaiB family. As to quaternary structure, undergoes a major conformational rearrangment; in the free state forms homotetramers with 2 dimers. When bound to the CI domain of KaiC, KaiA or CikA switches to a monomeric thioredoxin-fold (KaiB(fs)). The KaiABC complex composition changes during the circadian cycle to control KaiC phosphorylation. Complexes KaiC(6), KaiA(2-4):KaiC(6), KaiB(6):KaiC(6) and KaiC(6):KaiB(6):KaiA(12) are among the most important forms, many form cooperatively. Binds to KaiA; 1 KaiB(fs) binds to the KaiA homodimer. Binds to the B-loop in the CI domain of KaiC; SasA and KaiB compete to bind to the CI domain. Binding to KaiC CI domain occurs 1:1. KaiA and CikA bind to the same region of KaiB(fs) and therefore compete.

Key component of the KaiABC oscillator complex, which constitutes the main circadian regulator in cyanobacteria. Its composition changes during the circadian cycle to control KaiC phosphorylation. KaiA stimulates KaiC autophosphorylation, while KaiB sequesters KaiA, leading to KaiC autodephosphorylation. KaiA binding to KaiC yields KaiA(2-4):KaiC(6) complexes which stimulate KaiC autophosphorylation. Phospho-Ser-431 KaiC accumulation triggers binding of KaiB to form the KaiB(6):KaiC(6) complex, leading to changes in the output regulators CikA and SasA. KaiB switches to a thioredoxin-like fold (KaiB(fs)) in complex with KaiC. KaiB(6):KaiC(6) formation exposes a site for KaiA binding that sequesters KaiA from the CII domain, making the KaiC(6):KaiB(6):KaiA(12) complex that results in KaiC autodephosphorylation. Complete dephosphorylation of KaiC leads to dissociation of KaiA(2):KaiB(1), completing 1 cycle of the Kai oscillator. In terms of biological role, a metamorphic protein which reversibly switches between an inactive tetrameric fold and a rare, thioredoxin-like monomeric fold (KaiB(fs)). KaiB(fs) binds phospho-KaiC, KaiA and CikA. KaiA and CikA compete for binding to KaiB(fs), and KaiB(fs) and SasA compete for binding to KaiC, thus the clock oscillator and output signal pathway are tightly coupled. This is Circadian clock oscillator protein KaiB from Thermosynechococcus vestitus (strain NIES-2133 / IAM M-273 / BP-1).